A 365-amino-acid chain; its full sequence is Probable 7-methylxanthine methyltransferase 3 (365 aa).

Tyr-18 is a binding site for S-adenosyl-L-homocysteine. Position 25 (Thr-25) interacts with theobromine. S-adenosyl-L-homocysteine contacts are provided by Cys-62, Gln-67, Asp-99, Leu-100, Ser-132, and Phe-133. Theobromine is bound by residues Tyr-150, His-153, and Trp-154. The Mg(2+) site is built by Asn-170, Phe-258, and Asn-259. Theobromine is bound at residue Phe-311.

It belongs to the methyltransferase superfamily. Type-7 methyltransferase family. Mg(2+) serves as cofactor.

The enzyme catalyses 7-methylxanthine + S-adenosyl-L-methionine = theobromine + S-adenosyl-L-homocysteine + H(+). The protein operates within alkaloid biosynthesis. Functionally, involved in the biosynthesis of theobromine. The protein is Probable 7-methylxanthine methyltransferase 3 of Theobroma cacao (Cacao).